The following is a 177-amino-acid chain: R-phycoerythrin beta chain (177 aa).

Cysteine 50 and cysteine 61 together coordinate phycourobilin. The residue at position 72 (asparagine 72) is an N4-methylasparagine. Cysteine 82 and cysteine 158 together coordinate (2R,3E)-phycoerythrobilin.

The protein belongs to the phycobiliprotein family. Heterodimer of an alpha and a beta chain. Contains two covalently linked phycoerythrobilin chromophores and one covalently linked phycourobilin chromophore.

The protein resides in the plastid. It is found in the chloroplast thylakoid membrane. Its function is as follows. Light-harvesting photosynthetic bile pigment-protein from the phycobiliprotein complex. This Pyropia haitanensis (Red seaweed) protein is R-phycoerythrin beta chain (cpeB).